The primary structure comprises 182 residues: NADH-dependent FAD reductase (182 aa).

Asp16 contributes to the NAD(+) binding site. Residues 47–48 (NS), 62–64 (CVG), and His98 each bind FAD. His143 provides a ligand contact to NAD(+).

It belongs to the non-flavoprotein flavin reductase family. As to quaternary structure, homodimer.

It catalyses the reaction FADH2 + NAD(+) = FAD + NADH + 2 H(+). It participates in antibiotic biosynthesis. With respect to regulation, the SgcE6-SgcC hydroxylation activity decreases in the presence of excess FAD. Functionally, reductase component of a two-component system involved in the biosynthesis of the enediyne antitumor antibiotic C-1027. SgcE6 provides the FADH(2) required by both the halogenase SgcC3 and the monooxygenase SgcC through free diffusion. Accepts only NADH and FAD as substrates. This Streptomyces globisporus protein is NADH-dependent FAD reductase.